The primary structure comprises 379 residues: UDP-4-amino-4-deoxy-L-arabinose--oxoglutarate aminotransferase (379 aa).

Lys182 is modified (N6-(pyridoxal phosphate)lysine).

This sequence belongs to the DegT/DnrJ/EryC1 family. ArnB subfamily. In terms of assembly, homodimer. Requires pyridoxal 5'-phosphate as cofactor.

The enzyme catalyses UDP-4-amino-4-deoxy-beta-L-arabinose + 2-oxoglutarate = UDP-beta-L-threo-pentopyranos-4-ulose + L-glutamate. It functions in the pathway nucleotide-sugar biosynthesis; UDP-4-deoxy-4-formamido-beta-L-arabinose biosynthesis; UDP-4-deoxy-4-formamido-beta-L-arabinose from UDP-alpha-D-glucuronate: step 2/3. The protein operates within bacterial outer membrane biogenesis; lipopolysaccharide biosynthesis. Functionally, catalyzes the conversion of UDP-4-keto-arabinose (UDP-Ara4O) to UDP-4-amino-4-deoxy-L-arabinose (UDP-L-Ara4N). The modified arabinose is attached to lipid A and is required for resistance to polymyxin and cationic antimicrobial peptides. In Enterobacter sp. (strain 638), this protein is UDP-4-amino-4-deoxy-L-arabinose--oxoglutarate aminotransferase.